Here is a 244-residue protein sequence, read N- to C-terminus: Protein crossbronx (244 aa).

The region spanning 20-176 (QQEYKILAEY…VQKNIKESKD (157 aa)) is the UBC core domain.

The protein belongs to the ubiquitin-conjugating enzyme family. FTS subfamily.

This chain is Protein crossbronx (cbx), found in Drosophila yakuba (Fruit fly).